The primary structure comprises 433 residues: Enolase (433 aa).

Gln167 provides a ligand contact to (2R)-2-phosphoglycerate. The active-site Proton donor is the Glu209. Asp246 is a Mg(2+) binding site. A Plasminogen-binding motif motif is present at residues 252–260 (FYDAEKKEY). Positions 291 and 318 each coordinate Mg(2+). Positions 343, 372, 373, and 394 each coordinate (2R)-2-phosphoglycerate. Lys343 acts as the Proton acceptor in catalysis.

Belongs to the enolase family. As to quaternary structure, component of the RNA degradosome, a multiprotein complex involved in RNA processing and mRNA degradation. The cofactor is Mg(2+).

The protein localises to the cell inner membrane. It localises to the cell outer membrane. The protein resides in the cytoplasm. It is found in the secreted. Its subcellular location is the cell surface. The enzyme catalyses (2R)-2-phosphoglycerate = phosphoenolpyruvate + H2O. It participates in carbohydrate degradation; glycolysis; pyruvate from D-glyceraldehyde 3-phosphate: step 4/5. Catalyzes the reversible conversion of 2-phosphoglycerate (2-PG) into phosphoenolpyruvate (PEP). It is essential for the degradation of carbohydrates via glycolysis. In terms of biological role, 'Moonlights' as a plasminogen receptor and plasmin activator. Binds host (human) plasminogen in vitro. Binds human plasmin and plasminogen on the cell surface; enhances the activity of host tissue-specific plasminogen activator (tPA). Plasmin bound to bacteria is partially protected from its physiological inhibitor alpha-2AP (SERPINF2). The chain is Enolase from Aeromonas hydrophila.